The following is a 293-amino-acid chain: RNA pseudouridylate synthase domain-containing protein 1 (293 aa).

The active site involves aspartate 67.

It belongs to the pseudouridine synthase RluA family.

This is RNA pseudouridylate synthase domain-containing protein 1 (rpusd1) from Danio rerio (Zebrafish).